A 964-amino-acid polypeptide reads, in one-letter code: Adhesion defective protein 3 (964 aa).

The disordered stretch occupies residues 1 to 32 (MADFMDIEPSSHSAKASQYESSAPASSSLGNS). Over residues 16–32 (ASQYESSAPASSSLGNS) the composition is skewed to low complexity. In terms of domain architecture, LisH spans 34-66 (PNESLDYYIYDYFVKHNFEEAAQAFLRESKIQI). The span at 69–83 (SSSSTAFSPSNNNAP) shows a compositional bias: low complexity. Disordered stretches follow at residues 69-125 (SSSS…EETN), 241-273 (PKGT…PASA), 476-523 (VSMK…TSRM), 572-596 (QTLS…MSMD), and 664-914 (APMI…KPIS). 3 stretches are compositionally biased toward polar residues: residues 93–103 (LASPSKISESI), 261–270 (AMQNPHNSFP), and 508–523 (TQAN…TSRM). Residues 575–589 (SSGNQPPQQSGPNPN) show a composition bias toward low complexity. Polar residues-rich tracts occupy residues 664–700 (APMI…TNRN), 707–716 (SPHQQFSPSA), 724–752 (RSMS…QNKE), 767–801 (AFPQ…SSLH), 818–828 (TIRTTERSTFS), and 857–868 (GGTNSISQDTTQ). Residues 869–885 (SLQMQSNSVNSSSMVDA) are compositionally biased toward low complexity. Residues 894–905 (GDTSALDSNAKN) show a composition bias toward polar residues.

The protein belongs to the FLO8 family.

It is found in the cytoplasm. Its subcellular location is the nucleus. Probable transcriptional regulator involved in cell adhesion. This chain is Adhesion defective protein 3 (adn3), found in Schizosaccharomyces pombe (strain 972 / ATCC 24843) (Fission yeast).